The following is a 1373-amino-acid chain: DNA-directed RNA polymerase subunit beta (1373 aa).

Belongs to the RNA polymerase beta chain family. As to quaternary structure, the RNAP catalytic core consists of 2 alpha, 1 beta, 1 beta' and 1 omega subunit. When a sigma factor is associated with the core the holoenzyme is formed, which can initiate transcription.

The catalysed reaction is RNA(n) + a ribonucleoside 5'-triphosphate = RNA(n+1) + diphosphate. DNA-dependent RNA polymerase catalyzes the transcription of DNA into RNA using the four ribonucleoside triphosphates as substrates. This Rickettsia conorii (strain ATCC VR-613 / Malish 7) protein is DNA-directed RNA polymerase subunit beta.